The chain runs to 386 residues: Lipoyl synthase, mitochondrial (386 aa).

[4Fe-4S] cluster is bound by residues C110, C115, C121, C141, C145, C148, and S356. Positions 124–345 (GNDKSKATAT…KEQALEMGFL (222 aa)) constitute a Radical SAM core domain.

Belongs to the radical SAM superfamily. Lipoyl synthase family. [4Fe-4S] cluster serves as cofactor.

It localises to the mitochondrion. The catalysed reaction is [[Fe-S] cluster scaffold protein carrying a second [4Fe-4S](2+) cluster] + N(6)-octanoyl-L-lysyl-[protein] + 2 oxidized [2Fe-2S]-[ferredoxin] + 2 S-adenosyl-L-methionine + 4 H(+) = [[Fe-S] cluster scaffold protein] + N(6)-[(R)-dihydrolipoyl]-L-lysyl-[protein] + 4 Fe(3+) + 2 hydrogen sulfide + 2 5'-deoxyadenosine + 2 L-methionine + 2 reduced [2Fe-2S]-[ferredoxin]. The protein operates within protein modification; protein lipoylation via endogenous pathway; protein N(6)-(lipoyl)lysine from octanoyl-[acyl-carrier-protein]: step 2/2. In terms of biological role, catalyzes the radical-mediated insertion of two sulfur atoms into the C-6 and C-8 positions of the octanoyl moiety bound to the lipoyl domains of lipoate-dependent enzymes, thereby converting the octanoylated domains into lipoylated derivatives. The chain is Lipoyl synthase, mitochondrial from Zygosaccharomyces rouxii (strain ATCC 2623 / CBS 732 / NBRC 1130 / NCYC 568 / NRRL Y-229).